Consider the following 501-residue polypeptide: MSNEEINIHEAEEQLSEQEMLRRQKLVELQEAGKDPFDVYKVERTHSSADVKDNFEELEGKEVKVAGRLMSKRGQGKVVFADLADLPGKIQLFIKIDNVGEEALKEFKTFDLGDWVAATGEVFKTKMGEVSVKVTSFELICKSLKPLPEKWHGLKDPDLRYRQREVDIITNPEVKDTFIKRSQIVKAIREFLDNRGFLEVDTPILSPIAGGAAARPFITHHNALDIDMYLRIATELYLKRLIVAGFEKVYEMGKNFRNEGVSVRHNPEFTAIELYEAYADYNDMMEIMENMIAYVCEKVNGSTKVTYEGTEIDFTPPWRRITMVDAVKEFAGIDFNEIKSDEEAQAIAKEKNLEFPKPLDKVTKGEVLNMLFEEYGEDKLIQPTFLIDYPVEISPLTKKKRGNEMFTERFEGFVYGREVCNAYSELNDPIVQRERFEQQAREREYGDDEAYMLDEEFMSALETGMPPTGGLGIGIDRMIMFLTDSSSIRDVILFPTMKPQK.

Positions 411 and 418 each coordinate Mg(2+).

It belongs to the class-II aminoacyl-tRNA synthetase family. As to quaternary structure, homodimer. It depends on Mg(2+) as a cofactor.

The protein resides in the cytoplasm. It carries out the reaction tRNA(Lys) + L-lysine + ATP = L-lysyl-tRNA(Lys) + AMP + diphosphate. This Clostridium perfringens (strain 13 / Type A) protein is Lysine--tRNA ligase.